The chain runs to 192 residues: MSSFWSKVKDFVGFGDPLEYEEDGEEYEQVYREENKREEARRATAGTAAAATPTAAAQASDAAPMGSGPARKRVRAGNVIGMPNSGVNEVLVIEPRSFEEAPQIVQHLRDRKSVILNLTLMDSDQAQRSVDFVAGATFAIDGHQERVGDGIFLFTPSSVMISTEMPSQLRQANQAFGGNFRLNPEAPRRAQG.

The disordered stretch occupies residues 15–70; the sequence is GDPLEYEEDGEEYEQVYREENKREEARRATAGTAAAATPTAAAQASDAAPMGSGPA. A compositionally biased stretch (acidic residues) spans 18-28; sequence LEYEEDGEEYE. A compositionally biased stretch (basic and acidic residues) spans 29 to 42; that stretch reads QVYREENKREEARR. The span at 43 to 63 shows a compositional bias: low complexity; the sequence is ATAGTAAAATPTAAAQASDAA.

It belongs to the SepF family. Homodimer. Interacts with FtsZ.

It localises to the cytoplasm. In terms of biological role, cell division protein that is part of the divisome complex and is recruited early to the Z-ring. Probably stimulates Z-ring formation, perhaps through the cross-linking of FtsZ protofilaments. Its function overlaps with FtsA. This Gloeobacter violaceus (strain ATCC 29082 / PCC 7421) protein is Cell division protein SepF.